Here is a 438-residue protein sequence, read N- to C-terminus: Protein maelstrom 1 (438 aa).

The segment at residues Ala-2–Leu-69 is a DNA-binding region (HMG box). Residues Lys-374 to Arg-438 form a disordered region. Over residues Leu-381 to Ser-391 the composition is skewed to polar residues.

It belongs to the maelstrom family.

The protein resides in the cytoplasm. It is found in the nucleus. Functionally, involved both in the piRNA and miRNA metabolic processes. As a component of the meiotic nuage, plays a central role during oogenesis by repressing transposable elements and preventing their mobilization, which is essential for the germline integrity. Repression of transposable elements is mediated via the piRNA metabolic process, which mediates the repression of transposable elements during meiosis by forming complexes composed of piRNAs and Piwi proteins and governs the repression of transposons. As a nuclear component, it is required for proper differentiation in the germline stem cell (GSC) lineage by repressing microRNA-7 (miR-7), thereby acting as an indirect regulator of bag-of-marbles (Bam). Acts by binding to the promoter of miR-7 gene and repressing its expression; miR-7 repression alleviates the Bam repression by miR-7, thereby allowing differentiation in the germline stem cell (GSC) lineage. This is Protein maelstrom 1 (mael1) from Drosophila persimilis (Fruit fly).